A 72-amino-acid chain; its full sequence is Translation initiation factor IF-1 (72 aa).

The region spanning 1 to 72 is the S1-like domain; the sequence is MSKDDVIQMQ…SRARIVFRAK (72 aa).

Belongs to the IF-1 family. As to quaternary structure, component of the 30S ribosomal translation pre-initiation complex which assembles on the 30S ribosome in the order IF-2 and IF-3, IF-1 and N-formylmethionyl-tRNA(fMet); mRNA recruitment can occur at any time during PIC assembly.

The protein localises to the cytoplasm. One of the essential components for the initiation of protein synthesis. Stabilizes the binding of IF-2 and IF-3 on the 30S subunit to which N-formylmethionyl-tRNA(fMet) subsequently binds. Helps modulate mRNA selection, yielding the 30S pre-initiation complex (PIC). Upon addition of the 50S ribosomal subunit IF-1, IF-2 and IF-3 are released leaving the mature 70S translation initiation complex. The polypeptide is Translation initiation factor IF-1 (Methylibium petroleiphilum (strain ATCC BAA-1232 / LMG 22953 / PM1)).